A 457-amino-acid polypeptide reads, in one-letter code: Acetate--CoA ligase [ADP-forming] II subunit alpha (457 aa).

Belongs to the acetate CoA ligase alpha subunit family. In terms of assembly, heterotetramer of two alpha and two beta subunits.

The enzyme catalyses acetate + ATP + CoA = acetyl-CoA + ADP + phosphate. Functionally, catalyzes the reversible formation of acetate and ATP from acetyl-CoA by using ADP and phosphate. Can use other substrates such as phenylacetyl-CoA, indoleacetyl-CoA and isobutyryl-CoA, but not succinyl-CoA. Seems to be involved primarily in the degradation of aryl-CoA esters to the corresponding acids. Participates in the conversion of acetyl-CoA to acetate and in the degradation of branched-chain amino acids via branched-chain-acyl-CoA esters. The protein is Acetate--CoA ligase [ADP-forming] II subunit alpha of Pyrococcus furiosus (strain ATCC 43587 / DSM 3638 / JCM 8422 / Vc1).